The primary structure comprises 994 residues: Leucine-rich repeat receptor-like kinase protein FLORAL ORGAN NUMBER1 (994 aa).

An N-terminal signal peptide occupies residues 1 to 17 (MPPTLLLLLLLLPPSLA). 21 LRR repeats span residues 73–93 (AINL…IALL), 94–117 (DSLA…LPTL), 118–141 (PSLR…DSGG), 147–171 (FPSL…SASH), 172–194 (ARLR…SYGD), 195–219 (LAAL…LSRL), 244–268 (LGAL…LGRL), 269–292 (QRLD…LGDL), 293–316 (SSLA…LANL), 318–340 (NLKL…VAGF), 341–364 (AQLE…LGKN), 365–388 (GRLK…LCAG), 390–412 (RLEM…LGDC), 413–436 (KTLT…LFNL), 438–459 (QANM…VIGG), 460–483 (DKIG…IGNL), 484–507 (PALQ…IGNL), 509–531 (NLSR…LIRC), 533–555 (SLAA…ITSL), 556–579 (KILC…MSNM), and 581–604 (SLTT…QFLV). N-linked (GlcNAc...) asparagine glycosylation is found at N75, N98, N124, N129, and N159. N256 carries N-linked (GlcNAc...) asparagine glycosylation. N-linked (GlcNAc...) asparagine glycosylation is present at N315. N-linked (GlcNAc...) asparagine glycosylation is present at N352. N-linked (GlcNAc...) asparagine glycans are attached at residues N495, N509, and N514. N-linked (GlcNAc...) asparagine glycans are attached at residues N562 and N578. N606 carries an N-linked (GlcNAc...) asparagine glycan. The helical transmembrane segment at 647 to 667 (KKMLVALVAAFAAVAVAFLGA) threads the bilayer. A Protein kinase domain is found at 704–978 (VKEDNIIGKG…TMREVVHMLS (275 aa)). ATP is bound by residues 710-718 (IGKGGAGIV) and K731. Residue D828 is the Proton acceptor of the active site.

This sequence belongs to the protein kinase superfamily. Ser/Thr protein kinase family. Expressed in shoot apical meristem, and after transition to the reproductive phase, detected in the inflorescence and the floral meristems. Expressed uniformly throughout the meristems. Expressed also in floral organ primordia, such as the palea, lemma, lodicules, stamens, carpels and ovules.

It is found in the membrane. The catalysed reaction is L-seryl-[protein] + ATP = O-phospho-L-seryl-[protein] + ADP + H(+). It carries out the reaction L-threonyl-[protein] + ATP = O-phospho-L-threonyl-[protein] + ADP + H(+). Its function is as follows. Receptor-like kinase protein that regulates the size of the floral meristem. This chain is Leucine-rich repeat receptor-like kinase protein FLORAL ORGAN NUMBER1 (FON1), found in Oryza sativa subsp. japonica (Rice).